The chain runs to 313 residues: Probable cell division protein WhiA (313 aa).

Positions 280-313 (SLKELGAMLNPPIGKSGVNHRLKKLCSIADGLRQ) form a DNA-binding region, H-T-H motif.

This sequence belongs to the WhiA family.

Involved in cell division and chromosome segregation. This chain is Probable cell division protein WhiA, found in Lachnoclostridium phytofermentans (strain ATCC 700394 / DSM 18823 / ISDg) (Clostridium phytofermentans).